Reading from the N-terminus, the 423-residue chain is CinA-like protein (423 aa).

This sequence belongs to the CinA family.

This chain is CinA-like protein, found in Chlorobium phaeobacteroides (strain DSM 266 / SMG 266 / 2430).